Reading from the N-terminus, the 357-residue chain is Sulfate/thiosulfate import ATP-binding protein CysA (357 aa).

Residues 3–237 (IQIQGVSKQY…PASPFVYDFL (235 aa)) form the ABC transporter domain. 35-42 (GPSGSGKT) contributes to the ATP binding site.

Belongs to the ABC transporter superfamily. Sulfate/tungstate importer (TC 3.A.1.6) family. As to quaternary structure, the complex is composed of two ATP-binding proteins (CysA), two transmembrane proteins (CysT and CysW) and a solute-binding protein (CysP).

Its subcellular location is the cell membrane. It carries out the reaction sulfate(out) + ATP + H2O = sulfate(in) + ADP + phosphate + H(+). The enzyme catalyses thiosulfate(out) + ATP + H2O = thiosulfate(in) + ADP + phosphate + H(+). Part of the ABC transporter complex CysAWTP involved in sulfate/thiosulfate import. Responsible for energy coupling to the transport system. The chain is Sulfate/thiosulfate import ATP-binding protein CysA from Bacillus cereus (strain ATCC 14579 / DSM 31 / CCUG 7414 / JCM 2152 / NBRC 15305 / NCIMB 9373 / NCTC 2599 / NRRL B-3711).